Here is a 685-residue protein sequence, read N- to C-terminus: Phenoloxidase subunit 1 (685 aa).

Positions 209, 213, and 239 each coordinate Cu cation. Residue Glu351 is the Proton acceptor of the active site. 3 residues coordinate Cu cation: His366, His370, and His406. Disulfide bonds link Cys580-Cys622 and Cys582-Cys629.

Heterodimer. Forms a complex with an interleukin 1-like protein as a consequence of a host defense response. Cu(2+) is required as a cofactor. Post-translationally, the N-terminus is blocked. As to expression, synthesized by oenocytoids, a type of hemocyte, and released into the hemolymph plasma.

Its subcellular location is the secreted. The enzyme catalyses 2 L-dopa + O2 = 2 L-dopaquinone + 2 H2O. The catalysed reaction is L-tyrosine + O2 = L-dopaquinone + H2O. Activated by immulectin and lipopolysaccharide. In terms of biological role, this is a copper-containing oxidase that functions in the formation of pigments such as melanins and other polyphenolic compounds. Catalyzes the rate-limiting conversions of tyrosine to DOPA, DOPA to DOPA-quinone and possibly 5,6 dihydroxyindole to indole-5'6 quinone. Binds to the surface of hemocytes and is involved in hemocyte melanization. The protein is Phenoloxidase subunit 1 of Manduca sexta (Tobacco hawkmoth).